A 124-amino-acid chain; its full sequence is V-type proton ATPase subunit F (124 aa).

This sequence belongs to the V-ATPase F subunit family. As to quaternary structure, V-ATPase is a heteromultimeric enzyme composed of a peripheral catalytic V1 complex (components A to H) attached to an integral membrane V0 proton pore complex (components: a, c, c', c'', d, e, f and VOA1).

The protein resides in the vacuole membrane. Subunit of the V1 complex of vacuolar(H+)-ATPase (V-ATPase), a multisubunit enzyme composed of a peripheral complex (V1) that hydrolyzes ATP and a membrane integral complex (V0) that translocates protons. V-ATPase is responsible for acidifying and maintaining the pH of intracellular compartments. The protein is V-type proton ATPase subunit F (vma-7) of Neurospora crassa (strain ATCC 24698 / 74-OR23-1A / CBS 708.71 / DSM 1257 / FGSC 987).